A 304-amino-acid polypeptide reads, in one-letter code: Calmodulin-lysine N-methyltransferase (304 aa).

The protein belongs to the class I-like SAM-binding methyltransferase superfamily. CLNMT methyltransferase family. In terms of assembly, monomer. In terms of tissue distribution, expressed in discreet spatial and tissue-specific patterns including root tips, leaves-tips, floral buds, stamens, hydathodes, stigma, anther, siliques, apical meristems and germinating seeds. Also observed at high levels in the root stele region.

The protein localises to the cytoplasm. It is found in the nucleus. It carries out the reaction [calmodulin]-L-lysine + S-adenosyl-L-methionine = [calmodulin]-N(6)-methyl-L-lysine + S-adenosyl-L-homocysteine + H(+). Its function is as follows. Catalyzes the trimethylation of calmodulin. Regulates roots development probably by modulating auxin signaling responses. May be involved in gravitropism. Involved in abscisic acid (ABA)-mediated and abiotic stress responses, including salt (NaCl), cold, drought and heat stresses. The polypeptide is Calmodulin-lysine N-methyltransferase (Arabidopsis thaliana (Mouse-ear cress)).